Here is a 325-residue protein sequence, read N- to C-terminus: Probable 2-ketogluconate reductase (325 aa).

Residues 158-159 (RI), threonine 211, 238-240 (ISR), and aspartate 264 each bind NAD(+). The active site involves arginine 240. Glutamate 269 is a catalytic residue. Catalysis depends on histidine 288, which acts as the Proton donor. 288–291 (HIGS) is an NAD(+) binding site.

Belongs to the D-isomer specific 2-hydroxyacid dehydrogenase family.

It carries out the reaction D-gluconate + NADP(+) = 2-dehydro-D-gluconate + NADPH + H(+). In Bacillus subtilis (strain 168), this protein is Probable 2-ketogluconate reductase (yvcT).